Reading from the N-terminus, the 171-residue chain is S-ribosylhomocysteine lyase (171 aa).

Positions 54, 58, and 128 each coordinate Fe cation.

It belongs to the LuxS family. In terms of assembly, homodimer. Fe cation serves as cofactor.

The enzyme catalyses S-(5-deoxy-D-ribos-5-yl)-L-homocysteine = (S)-4,5-dihydroxypentane-2,3-dione + L-homocysteine. Its function is as follows. Involved in the synthesis of autoinducer 2 (AI-2) which is secreted by bacteria and is used to communicate both the cell density and the metabolic potential of the environment. The regulation of gene expression in response to changes in cell density is called quorum sensing. Catalyzes the transformation of S-ribosylhomocysteine (RHC) to homocysteine (HC) and 4,5-dihydroxy-2,3-pentadione (DPD). The chain is S-ribosylhomocysteine lyase from Shigella boydii serotype 4 (strain Sb227).